The following is a 628-amino-acid chain: MAQRIPQEVIEEVRHRTNIVDIIGQYVQLKKSGKNYMGLCPFHEERSPSFSVAEDKQIFHCFGCGKGGTVFNFLQEIEGISFPESVKRVADLEHLSVDFDWSEPREVADTPENQQRRSLLQLHSKAAELYHHILVNTKIGEPALNYLLERGLTQELIETFQIGFAPQKRDFLSQVFKNEQLDETLFEPSGLFVQRDNGTFLDRFYQRIMFPINDPQGNVIAFSGRLLKTADFPGDEMPKYLNSPETTLFNKRETLFNFDRARKEIRKENTVLLFEGFMDVIAAWQSGVKSGVASMGTSLTNEQIRRLERVAKEVVICYDGDNAGVQATNRAIQLLQENSHFDLSIVSIPEKLDPDEYVRKYGAEAFQNLANHGRETVFSFKMNYHRLTRNMNNEKEQLDYVNELLRELTNVQSPLERDRYLNQIAQEFQLSVHSLEEQFNQLKQEQRSVQRQERQQFYQDEMMPPPMEEPVFEENHVQNKLPLTQVQKAERSLLFRLMNEQGVRQTIQQLPDFSFAHDEYQELYFLLESYATLHQSFDIADFINFLQDNQTKQLAIEIAYQNLSEESSEREVADLLHVIALSSIAEAIEQKKIQQQEAKRVGNQQLEAELTMEIIQLARQLKAQRTFT.

A CHC2-type zinc finger spans residues 40-64 (CPFHEERSPSFSVAEDKQIFHCFGC). One can recognise a Toprim domain in the interval 269-351 (NTVLLFEGFM…DLSIVSIPEK (83 aa)). Positions 275, 319, and 321 each coordinate Mg(2+).

The protein belongs to the DnaG primase family. Monomer. Interacts with DnaB. Requires Zn(2+) as cofactor. Mg(2+) is required as a cofactor.

It carries out the reaction ssDNA + n NTP = ssDNA/pppN(pN)n-1 hybrid + (n-1) diphosphate.. Functionally, RNA polymerase that catalyzes the synthesis of short RNA molecules used as primers for DNA polymerase during DNA replication. The protein is DNA primase of Enterococcus faecalis (strain ATCC 700802 / V583).